The following is a 115-amino-acid chain: Parathyroid hormone (115 aa).

The N-terminal stretch at 1 to 25 (MMSANTVAKVMIIMLAVCLLTQTDG) is a signal peptide. The propeptide occupies 26–31 (KPVRKR). Positions 51 to 69 (RMQWLRRKLQDMHNFVSLG) are important for receptor binding.

Belongs to the parathyroid hormone family. In terms of assembly, interacts with PTH1R (via N-terminal extracellular domain). In terms of tissue distribution, highly expressed in the parathyroid gland. Also expressed in the placenta, thymus and testis.

It is found in the secreted. Functionally, parathyroid hormone elevates calcium level by dissolving the salts in bone and preventing their renal excretion. Acts by binding to its receptor, PTH1R, activating G protein-coupled receptor signaling. Stimulates [1-14C]-2-deoxy-D-glucose (2DG) transport and glycogen synthesis in osteoblastic cells. In Mus musculus (Mouse), this protein is Parathyroid hormone.